A 257-amino-acid polypeptide reads, in one-letter code: Zinc transporter ZupT (257 aa).

Transmembrane regions (helical) follow at residues 5–25 (LILT…GVLG), 32–52 (LLAF…LMEM), and 61–81 (GMSP…YFGL). The Fe(2+) site is built by asparagine 120 and glutamate 123. Positions 123 and 148 each coordinate Zn(2+). Transmembrane regions (helical) follow at residues 137–157 (LGFG…LAVA), 171–191 (ILWA…AWLI), 195–215 (MISP…MVAL), and 236–256 (GVLC…TAGI). 3 residues coordinate Fe(2+): asparagine 149, glutamate 152, and glutamate 181. Glutamate 152 is a Zn(2+) binding site.

This sequence belongs to the ZIP transporter (TC 2.A.5) family. ZupT subfamily.

It is found in the cell inner membrane. The enzyme catalyses Zn(2+)(in) = Zn(2+)(out). Its function is as follows. Mediates zinc uptake. May also transport other divalent cations. The chain is Zinc transporter ZupT from Escherichia coli O7:K1 (strain IAI39 / ExPEC).